A 312-amino-acid polypeptide reads, in one-letter code: Olfactory receptor 4L1 (312 aa).

Over 1–25 (MDLKNGSLVTEFILLGFFGRWELQI) the chain is Extracellular. N5 carries N-linked (GlcNAc...) asparagine glycosylation. Residues 26–49 (FFFVTFSLIYGATVMGNILIMVTV) form a helical membrane-spanning segment. At 50-57 (TCRSTLHS) the chain is on the cytoplasmic side. A helical transmembrane segment spans residues 58 to 79 (PLYFLLGNLSFLDMCLSTATTP). Over 80–100 (KMIIDLLTDHKTISVWGCVTQ) the chain is Extracellular. Residues C97 and C189 are joined by a disulfide bond. A helical membrane pass occupies residues 101 to 120 (MFFMHFFGGAEMTLLIIMAF). Over 121–139 (DRYVAICKPLHYRTIMSHK) the chain is Cytoplasmic. A helical membrane pass occupies residues 140–158 (LLKGFAILSWIIGFLHSIS). Over 159–195 (QIVLTMNLPFCGHNVINNIFCDLPLVIKLACIETYTL) the chain is Extracellular. A helical membrane pass occupies residues 196-219 (ELFVIADSGLLSFTCFILLLVSYI). Residues 220–235 (VILVSVPKKSSHGLSK) are Cytoplasmic-facing. Residues 236 to 258 (ALSTLSAHIIVVTLFFGPCIFIY) form a helical membrane-spanning segment. The Extracellular segment spans residues 259–269 (VWPFSSLASNK). N268 carries an N-linked (GlcNAc...) asparagine glycan. The chain crosses the membrane as a helical span at residues 270–289 (TLAVFYTVITPLLNPSIYTL). Topologically, residues 290–312 (RNKKMQEAIRKLRFQYVSSAQNF) are cytoplasmic.

It belongs to the G-protein coupled receptor 1 family.

The protein localises to the cell membrane. Odorant receptor. This chain is Olfactory receptor 4L1 (OR4L1), found in Homo sapiens (Human).